The following is a 144-amino-acid chain: Maximins z/Hv (144 aa).

A signal peptide spans 1–18 (MNFKYIVAVSFLIASGYA). Positions 19-43 (RSEENDVQSLSQREVLEEESLREIR) are excised as a propeptide. N70 carries the post-translational modification Asparagine amide. The propeptide occupies 74–123 (TAEDHEVMKRLKAVMRDLDSLDHPEEASERETRGFNQEEIANLFTKKEKR). Residue I143 is modified to Isoleucine amide.

It belongs to the bombinin family. Expressed by the skin glands.

Its subcellular location is the secreted. In terms of biological role, maximin-z shows antimicrobial activity against bacteria and against the fungus C.albicans. It has little hemolytic activity. Its function is as follows. Maximin-Hv shows antimicrobial activity against bacteria and against the fungus C.albicans. Shows strong hemolytic activity. This is Maximins z/Hv from Bombina maxima (Giant fire-bellied toad).